A 98-amino-acid polypeptide reads, in one-letter code: MAPKKTTKKGGPQKRPSAEKRILTAQKRYLINQSFKSKAKTMMKKFEAALKAGDQSSITSGLQLVYSVADKAVKRGIFKNNKAARIKSRATLRANVKI.

The segment covering 1–12 (MAPKKTTKKGGP) has biased composition (basic residues). The disordered stretch occupies residues 1 to 20 (MAPKKTTKKGGPQKRPSAEK).

The protein belongs to the bacterial ribosomal protein bS20 family.

Its function is as follows. Binds directly to 16S ribosomal RNA. This Chlamydia caviae (strain ATCC VR-813 / DSM 19441 / 03DC25 / GPIC) (Chlamydophila caviae) protein is Small ribosomal subunit protein bS20.